Here is a 747-residue protein sequence, read N- to C-terminus: Threonine synthase-like 1 (747 aa).

Position 351 is an N6-(pyridoxal phosphate)lysine (lysine 351).

The protein belongs to the threonine synthase family. The cofactor is pyridoxal 5'-phosphate.

The polypeptide is Threonine synthase-like 1 (Thnsl1) (Mus musculus (Mouse)).